The primary structure comprises 131 residues: Small ribosomal subunit protein eS8 (131 aa).

Positions 11–36 (DLKKPSGGKKGRVRKTKKKALCGGPP) are disordered. Over residues 16-30 (SGGKKGRVRKTKKKA) the composition is skewed to basic residues.

This sequence belongs to the eukaryotic ribosomal protein eS8 family. As to quaternary structure, part of the 30S ribosomal subunit.

This is Small ribosomal subunit protein eS8 from Pyrobaculum islandicum (strain DSM 4184 / JCM 9189 / GEO3).